A 376-amino-acid polypeptide reads, in one-letter code: Ribonucleoside-diphosphate reductase subunit beta (376 aa).

Fe cation is bound by residues Asp85, Glu116, and His119. Tyr123 is an active-site residue. Residues Glu205, Glu239, and His242 each coordinate Fe cation.

It belongs to the ribonucleoside diphosphate reductase small chain family. Tetramer of two alpha and two beta subunits. It depends on Fe cation as a cofactor.

The enzyme catalyses a 2'-deoxyribonucleoside 5'-diphosphate + [thioredoxin]-disulfide + H2O = a ribonucleoside 5'-diphosphate + [thioredoxin]-dithiol. Provides the precursors necessary for DNA synthesis. Catalyzes the biosynthesis of deoxyribonucleotides from the corresponding ribonucleotides. The chain is Ribonucleoside-diphosphate reductase subunit beta (nrdB) from Buchnera aphidicola subsp. Acyrthosiphon pisum (strain APS) (Acyrthosiphon pisum symbiotic bacterium).